Consider the following 133-residue polypeptide: Type III secretion protein HrcQb (133 aa).

Residues 1 to 21 (MSTEDLYQDDVEMLDDYEEPV) show a composition bias toward acidic residues. A disordered region spans residues 1 to 60 (MSTEDLYQDDVEMLDDYEEPVPEQADQQQRDDEYAEHAFGYADSDAEHEEQSGDHHESPM). Residues 49-59 (EEQSGDHHESP) show a composition bias toward basic and acidic residues.

Belongs to the FliN/MopA/SpaO family. Homotetramer. The four monomers assemble into two tightly bound homodimers. Interacts with HrcQa.

Its subcellular location is the cytoplasm. Its function is as follows. Component of the type III secretion system, which is required for effector protein delivery, parasitism, and pathogenicity. Probably participates in the formation of a C-ring-like assembly along with HrcQa. The protein is Type III secretion protein HrcQb (hrcQb) of Pseudomonas syringae pv. syringae.